A 520-amino-acid polypeptide reads, in one-letter code: DnaJ homolog l(2)tid, mitochondrial (520 aa).

The N-terminal 62 residues, 1-62 (MMISCKKLFV…RRLHTTRDLL (62 aa)), are a transit peptide targeting the mitochondrion. Position 30 is an omega-N-methylarginine (arginine 30). Positions 65–130 (DYYATLGVAK…QKRREYDTYG (66 aa)) constitute a J domain. Lysine 106 is subject to N6-acetyllysine. The CR-type zinc-finger motif lies at 214–292 (GVNKDVNVNV…CEGKGRTVQR (79 aa)). Cysteine 227, cysteine 230, cysteine 244, cysteine 247, cysteine 266, cysteine 269, cysteine 280, and cysteine 283 together coordinate Zn(2+). A CXXCXGXG motif; approximate repeat occupies 227 to 234 (CPKCAGTK). The CXXCXGXG motif repeat unit spans residues 244–251 (CQYCNGTG). A CXXCXGXG motif; approximate repeat occupies 266–273 (CRYCQGTR). The stretch at 280-287 (CSECEGKG) is one CXXCXGXG motif repeat. The segment at 430–520 (QIHGIANRKD…FISKIKSMFN (91 aa)) is disordered. Low complexity predominate over residues 446–476 (AGASEEPGAGAAAKASAAAAGSGASKPGPGA). Residues 479–495 (SEGKDQWTDNKKTKAKE) show a composition bias toward basic and acidic residues. Gly residues predominate over residues 496 to 511 (GGGSGSGQGDGGGGGF).

As to quaternary structure, interacts with ptc (via C-terminal cytoplasmic region); the interaction is probably direct. Interacts with hh/hedgehog; the interaction is probably mediated by the hedgehog receptor ptc. In terms of processing, appears to produce proteins of differing size. Predicted to have a molecular mass of 56 kDa (TID56) however proteins of 50 kDa, 47 kDa and 40 kDa have been identified and named TID50, TID47 and TID40. TID50 and TID40 localize to the mitochondria while TID47 localizes to the cytoplasm. TID50 is probably TID56 that has undergone mitochondrial transit peptide processing. TID40 and TID47 may be alternately processed proteins or may be isoforms resulting from alternative splicing. As to expression, ubiquitously expressed throughout embryonic development. In larvae, expression is seen in sensory organs, gopplet cells, gonads, imaginal disks, proventriculus, fat body, hematopoietic organ, midgut, Malpighian tubules and ring gland.

Its subcellular location is the cytoplasm. It is found in the cytosol. It localises to the mitochondrion. The protein localises to the mitochondrion outer membrane. Functionally, involved in hh/hedgehog signaling. May act as a tumor suppressor in larval imaginal disks. This chain is DnaJ homolog l(2)tid, mitochondrial, found in Drosophila melanogaster (Fruit fly).